The primary structure comprises 124 residues: Small ribosomal subunit protein uS12 (124 aa).

A 3-methylthioaspartic acid modification is found at D89. The segment at 103–124 (DTAGVKDRRQGRSKYGAKRPKD) is disordered. The segment covering 113–124 (GRSKYGAKRPKD) has biased composition (basic residues).

It belongs to the universal ribosomal protein uS12 family. As to quaternary structure, part of the 30S ribosomal subunit. Contacts proteins S8 and S17. May interact with IF1 in the 30S initiation complex.

In terms of biological role, with S4 and S5 plays an important role in translational accuracy. Functionally, interacts with and stabilizes bases of the 16S rRNA that are involved in tRNA selection in the A site and with the mRNA backbone. Located at the interface of the 30S and 50S subunits, it traverses the body of the 30S subunit contacting proteins on the other side and probably holding the rRNA structure together. The combined cluster of proteins S8, S12 and S17 appears to hold together the shoulder and platform of the 30S subunit. This Acaryochloris marina (strain MBIC 11017) protein is Small ribosomal subunit protein uS12.